We begin with the raw amino-acid sequence, 270 residues long: MMVLEQSETSRLGPVFDSCRADNRAALIGYLPTGYPDVPTSVDAMIELVESGCDIIEVGVPYSDPGMDGPTIARATEVALRGGVRVRDTLAAVEAISQAGGRAVVMTYWNPVLRYGVCAFARDLESAGGHGLVTPDLIPDEARQWIAASEKHRLDRIFLVAPSSTPHRLVTTVGASRGFVYAVSVMGVTGARDAVSQVVPELVARVKAVSDIAVGVGLGVRSREQAAQIGGYADGVIVGSALVSALGDGLPRLRALAEELAAGVRQRTFM.

Residues glutamate 57 and aspartate 68 each act as proton acceptor in the active site.

It belongs to the TrpA family. In terms of assembly, tetramer of two alpha and two beta chains.

The catalysed reaction is (1S,2R)-1-C-(indol-3-yl)glycerol 3-phosphate + L-serine = D-glyceraldehyde 3-phosphate + L-tryptophan + H2O. The protein operates within amino-acid biosynthesis; L-tryptophan biosynthesis; L-tryptophan from chorismate: step 5/5. The alpha subunit is responsible for the aldol cleavage of indoleglycerol phosphate to indole and glyceraldehyde 3-phosphate. The sequence is that of Tryptophan synthase alpha chain from Mycobacterium leprae (strain Br4923).